The chain runs to 360 residues: sn-glycerol-3-phosphate import ATP-binding protein UgpC (360 aa).

The 232-residue stretch at 4-235 (LSLKGVRKSY…PATTFVASFI (232 aa)) folds into the ABC transporter domain. 37 to 44 (GPSGCGKS) contacts ATP.

This sequence belongs to the ABC transporter superfamily. sn-glycerol-3-phosphate importer (TC 3.A.1.1.3) family. The complex is composed of two ATP-binding proteins (UgpC), two transmembrane proteins (UgpA and UgpE) and a solute-binding protein (UgpB).

The protein localises to the cell inner membrane. The catalysed reaction is sn-glycerol 3-phosphate(out) + ATP + H2O = sn-glycerol 3-phosphate(in) + ADP + phosphate + H(+). Functionally, part of the ABC transporter complex UgpBAEC involved in sn-glycerol-3-phosphate (G3P) import. Responsible for energy coupling to the transport system. The polypeptide is sn-glycerol-3-phosphate import ATP-binding protein UgpC (Burkholderia pseudomallei (strain 1710b)).